Reading from the N-terminus, the 1320-residue chain is CAP-Gly domain-containing linker protein 1 (1320 aa).

Positions 1-53 (MSMLKPSGLKAPTKILKPGSTALKTPAAAAAPLEKTVPSEKASGPPSSETQEE) are disordered. Positions 21–35 (TALKTPAAAAAPLEK) are enriched in low complexity. At serine 48 the chain carries Phosphoserine. Threonine 50 carries the post-translational modification Phosphothreonine. A CAP-Gly 1 domain is found at 78–120 (GETQFAPGQWAGIVLDEPIGKNDGSVAGVRYFQCEPLKGIFTR). An important for tubulin binding region spans residues 97–101 (GKNDG). Position 146 is a phosphoserine (serine 146). Polar residues predominate over residues 156-171 (VSSSPATPSNIPQKPS). The interval 156-181 (VSSSPATPSNIPQKPSQPVAKETSAT) is disordered. A Phosphothreonine modification is found at threonine 181. Residues serine 194, serine 196, serine 199, and serine 203 each carry the phosphoserine modification. The CAP-Gly 2 domain occupies 231–273 (GETDFAKGEWCGVELDEPLGKNDGAVAGTRYFQCQPKYGLFAP). The span at 301–331 (TTPASLKRSPSASSLSSMSSVASSVSSKPSR) shows a compositional bias: low complexity. The segment at 301 to 338 (TTPASLKRSPSASSLSSMSSVASSVSSKPSRTGLLTET) is disordered. At serine 309 the chain carries Phosphoserine. Phosphoserine; by PKA is present on serine 311. Serine 314 and serine 347 each carry phosphoserine. The tract at residues 1089-1109 (SLPSNTLRESEYRKDADEEKA) is disordered. Basic and acidic residues predominate over residues 1096-1109 (RESEYRKDADEEKA). At serine 1116 the chain carries Phosphoserine. The tract at residues 1178 to 1201 (KRQLSSSSGNTDVQTEEDERAQES) is disordered. The span at 1180-1190 (QLSSSSGNTDV) shows a compositional bias: polar residues. Serine 1246 carries the post-translational modification Phosphoserine. The CCHC-type zinc-finger motif lies at 1299–1316 (PYCEICEMFGHWATNCND).

In terms of assembly, interacts with MTOR; phosphorylates and regulates CLIP1. Interacts (via CAP-Gly domains) with tubulin and TUBA1B. Interacts with SLAIN2. Interacts with MAPRE1 and MAPRE3. Interacts (via zinc finger) with DCTN1. Binds preferentially to tyrosinated microtubules, and only marginally to detyrosinated microtubules. In terms of processing, phosphorylated. Phosphorylation induces conformational changes by increasing the affinity of the N-terminus for C-terminus, resulting in inhibition of its function thus decreasing its binding to microtubules and DCTN1. Exhibits a folded, autoinhibited conformation when phosphorylated and an open conformation when dephosphorylated with increased binding affinity to microtubules and DCTN1. Phosphorylation regulates its recruitment to tyrosinated microtubules and the recruitment of vesicular cargo to microtubules in neurons. Phosphorylation by MTOR may positively regulate CLIP1 association with microtubules.

The protein resides in the cytoplasm. The protein localises to the cytoskeleton. It localises to the cytoplasmic vesicle membrane. Its subcellular location is the cell projection. It is found in the ruffle. Its function is as follows. Binds to the plus end of microtubules and regulates the dynamics of the microtubule cytoskeleton. Promotes microtubule growth and microtubule bundling. Links cytoplasmic vesicles to microtubules and thereby plays an important role in intracellular vesicle trafficking. Plays a role macropinocytosis and endosome trafficking. The chain is CAP-Gly domain-containing linker protein 1 (Clip1) from Rattus norvegicus (Rat).